The primary structure comprises 250 residues: Uridylate kinase (250 aa).

Position 19-22 (19-22 (KLSG)) interacts with ATP. UMP is bound at residue Gly-61. ATP contacts are provided by Gly-62 and Arg-66. Residues Asp-81 and 142–149 (TGNPFFTT) each bind UMP. The ATP site is built by Thr-169, Gln-170, Tyr-175, and Asp-178.

Belongs to the UMP kinase family. In terms of assembly, homohexamer.

It localises to the cytoplasm. It carries out the reaction UMP + ATP = UDP + ADP. It functions in the pathway pyrimidine metabolism; CTP biosynthesis via de novo pathway; UDP from UMP (UMPK route): step 1/1. Its activity is regulated as follows. Inhibited by UTP. Its function is as follows. Catalyzes the reversible phosphorylation of UMP to UDP. This chain is Uridylate kinase, found in Rhodospirillum rubrum (strain ATCC 11170 / ATH 1.1.1 / DSM 467 / LMG 4362 / NCIMB 8255 / S1).